The following is an 87-amino-acid chain: uncharacterized protein (87 aa).

A run of 2 helical transmembrane segments spans residues 10–30 and 43–63; these read VAFT…FSIG and GYYI…QKVT.

The protein resides in the cell membrane. This is an uncharacterized protein from Bacillus subtilis (strain 168).